The sequence spans 98 residues: Small ribosomal subunit protein bS6 (98 aa).

It belongs to the bacterial ribosomal protein bS6 family.

Functionally, binds together with bS18 to 16S ribosomal RNA. The sequence is that of Small ribosomal subunit protein bS6 from Lactobacillus acidophilus (strain ATCC 700396 / NCK56 / N2 / NCFM).